The primary structure comprises 316 residues: Cytochrome c biogenesis protein CcsA (316 aa).

8 helical membrane passes run 19–39 (VLTL…FSFW), 47–67 (SSIV…QLVF), 77–97 (ISNL…IQLL), 106–126 (LIQA…SFVL), 151–171 (VIMC…VVLL), 224–244 (TITF…VWAN), 258–275 (TWAF…HTRL), and 285–305 (AIIA…VNFL).

This sequence belongs to the CcmF/CycK/Ccl1/NrfE/CcsA family. In terms of assembly, may interact with ccs1.

The protein localises to the cellular thylakoid membrane. In terms of biological role, required during biogenesis of c-type cytochromes (cytochrome c6 and cytochrome f) at the step of heme attachment. The polypeptide is Cytochrome c biogenesis protein CcsA (Prochlorococcus marinus (strain SARG / CCMP1375 / SS120)).